The primary structure comprises 523 residues: Histidine ammonia-lyase (523 aa).

The 5-imidazolinone (Ala-Gly) cross-link spans A148–G150. The residue at position 149 (S149) is a 2,3-didehydroalanine (Ser).

It belongs to the PAL/histidase family. In terms of processing, contains an active site 4-methylidene-imidazol-5-one (MIO), which is formed autocatalytically by cyclization and dehydration of residues Ala-Ser-Gly.

It is found in the cytoplasm. The enzyme catalyses L-histidine = trans-urocanate + NH4(+). Its pathway is amino-acid degradation; L-histidine degradation into L-glutamate; N-formimidoyl-L-glutamate from L-histidine: step 1/3. In Chloroflexus aurantiacus (strain ATCC 29366 / DSM 635 / J-10-fl), this protein is Histidine ammonia-lyase.